A 632-amino-acid polypeptide reads, in one-letter code: Mitochondrial distribution and morphology protein 34 (632 aa).

The region spanning 1–203 (MSFKVNWNSL…LPTLIHQLSL (203 aa)) is the SMP-LTD domain. Disordered stretches follow at residues 221-253 (ANAS…TSSL) and 384-435 (KPKR…SSTL). The span at 224-252 (STSSSSTSSTSSSTTSSSSSSSPSSFTSS) shows a compositional bias: low complexity. The segment covering 384-400 (KPKRRVIRLGKSKNKSK) has biased composition (basic residues). The span at 401–412 (SKTETKTEHNDE) shows a compositional bias: basic and acidic residues. Over residues 422–435 (PLSSTPASSSSSTL) the composition is skewed to low complexity.

This sequence belongs to the MDM34 family. Component of the ER-mitochondria encounter structure (ERMES) or MDM complex, composed of MMM1, MDM10, MDM12 and MDM34.

It is found in the mitochondrion outer membrane. In terms of biological role, component of the ERMES/MDM complex, which serves as a molecular tether to connect the endoplasmic reticulum (ER) and mitochondria. Components of this complex are involved in the control of mitochondrial shape and protein biogenesis, and function in nonvesicular lipid trafficking between the ER and mitochondria. MDM34 is required for the interaction of the ER-resident membrane protein MMM1 and the outer mitochondrial membrane-resident beta-barrel protein MDM10. The protein is Mitochondrial distribution and morphology protein 34 of Lodderomyces elongisporus (strain ATCC 11503 / CBS 2605 / JCM 1781 / NBRC 1676 / NRRL YB-4239) (Yeast).